Here is a 571-residue protein sequence, read N- to C-terminus: PR domain zinc finger protein 14 (571 aa).

A Phosphoserine modification is found at S79. Residues 129 to 191 (LGHQIIGGDN…PKPSNQEGKS (63 aa)) form a disordered region. The segment covering 165–176 (RTSQLLPCSPSK) has biased composition (polar residues). The interval 194-384 (RFQFTEEDLH…DIPVSLQVTE (191 aa)) is interaction with CBFA2T2. An SET domain is found at 251-367 (EGLCLMQTVF…QNQELLVWYG (117 aa)). The C2H2-type 1; atypical zinc finger occupies 400–424 (YRCERCGKVFTYKYYRDKHLKYTPC). C2H2-type zinc fingers lie at residues 432–455 (FPCSLCKRSFEKRDRLRIHILHVH), 461–483 (HKCSTCGKCFSQSSSLNKHMRVH), 489–511 (YQCVYCTKRFTASSILRTHIRQH), 517–540 (FKCKYCGKSFASHAAHDSHVRRSH), and 546–568 (CSCSICGKIFSDQETFYSHMKFH).

This sequence belongs to the class V-like SAM-binding methyltransferase superfamily. In terms of assembly, interacts with CBFA2T2. In terms of tissue distribution, expressed in embryonic stem cells. Tends to be overexpressed in breast cancer (at protein level).

It localises to the nucleus. Functionally, transcription factor that has both positive and negative roles on transcription. Required for the maintenance of embryonic stem cell identity and the reacquisition of pluripotency in somatic cells. May play an essential role in germ cell development at 2 levels: the reacquisition of potential pluripotency, including SOX2 up-regulation, and successful epigenetic reprogramming, characterized by EHMT1 repression. Its association with CBFA2T2 is required for the functions in pluripotency and germ cell formation. Directly up-regulates the expression of pluripotency gene POU5F1 through its proximal enhancer. Binds to the DNA consensus sequence 5'-GGTC[TC]CTAA-3'. This chain is PR domain zinc finger protein 14 (PRDM14), found in Homo sapiens (Human).